We begin with the raw amino-acid sequence, 130 residues long: Organ-specific protein P4 (130 aa).

Repeat copies occupy residues H60–I85 and H86–I111. Residues H60–I111 form a 2 X 26 AA tandem repeats region. The segment at A79 to A130 is disordered.

This sequence to organ specific protein S2. As to expression, expressed in pods.

The protein is Organ-specific protein P4 of Pisum sativum (Garden pea).